Here is a 607-residue protein sequence, read N- to C-terminus: Arginine--tRNA ligase (607 aa).

The 'HIGH' region motif lies at 147 to 157; it reads PNIAKEMHVGH.

The protein belongs to the class-I aminoacyl-tRNA synthetase family. In terms of assembly, monomer.

Its subcellular location is the cytoplasm. The enzyme catalyses tRNA(Arg) + L-arginine + ATP = L-arginyl-tRNA(Arg) + AMP + diphosphate. The chain is Arginine--tRNA ligase from Prochlorococcus marinus (strain NATL1A).